The following is a 250-amino-acid chain: MSILGKIQRTQPLILNLANFLTPQRVADVISFIGASPLMTSEIAELESLVEISDAVVVNIGTISESTYPLFLEACRLANQKAKPLILDPVAVNVPFRASIVKRLSQEVKFNIIRGNSAEIAWFADKKSLNKGIDALESNIDNEHARLAAKKTGAVIIETGKVDIISKGHEEMYVDTDSPLFKINVGCGDMLTAVVGTFAAVSDDLFTAAYEATKFFGEAGMIATKQVQNLPGNFVNSLLDTLYQATQEIK.

Met-39 lines the substrate pocket. ATP-binding residues include Arg-114 and Thr-159. Substrate is bound at residue Gly-186.

Belongs to the Thz kinase family. It depends on Mg(2+) as a cofactor.

It catalyses the reaction 5-(2-hydroxyethyl)-4-methylthiazole + ATP = 4-methyl-5-(2-phosphooxyethyl)-thiazole + ADP + H(+). The protein operates within cofactor biosynthesis; thiamine diphosphate biosynthesis; 4-methyl-5-(2-phosphoethyl)-thiazole from 5-(2-hydroxyethyl)-4-methylthiazole: step 1/1. In terms of biological role, catalyzes the phosphorylation of the hydroxyl group of 4-methyl-5-beta-hydroxyethylthiazole (THZ). This Lactococcus lactis subsp. cremoris (strain SK11) protein is Hydroxyethylthiazole kinase.